The following is a 136-amino-acid chain: NADH-quinone oxidoreductase subunit A (136 aa).

3 consecutive transmembrane segments (helical) span residues 20–40, 70–90, and 99–119; these read LAVY…VAWW, VPFY…AYIL, and LGWA…VGLV.

It belongs to the complex I subunit 3 family. NDH-1 is composed of 14 different subunits. Subunits NuoA, H, J, K, L, M, N constitute the membrane sector of the complex.

Its subcellular location is the cell inner membrane. It catalyses the reaction a quinone + NADH + 5 H(+)(in) = a quinol + NAD(+) + 4 H(+)(out). NDH-1 shuttles electrons from NADH, via FMN and iron-sulfur (Fe-S) centers, to quinones in the respiratory chain. The immediate electron acceptor for the enzyme in this species is believed to be ubiquinone. Couples the redox reaction to proton translocation (for every two electrons transferred, four hydrogen ions are translocated across the cytoplasmic membrane), and thus conserves the redox energy in a proton gradient. This chain is NADH-quinone oxidoreductase subunit A, found in Syntrophobacter fumaroxidans (strain DSM 10017 / MPOB).